A 418-amino-acid chain; its full sequence is Serpin A3-8 (418 aa).

Positions 1-25 are cleaved as a signal peptide; that stretch reads MRAERMSPLLALGLLVSGLCSRVHC. N-linked (GlcNAc...) asparagine glycans are attached at residues Asn103, Asn183, Asn233, and Asn268.

This sequence belongs to the serpin family. As to quaternary structure, homodimer.

The protein localises to the cytoplasmic vesicle. It localises to the secretory vesicle. The protein resides in the chromaffin granule. It is found in the secreted. Serine protease inhibitor. The polypeptide is Serpin A3-8 (Bos taurus (Bovine)).